Consider the following 465-residue polypeptide: Fujikurins efflux protein FFUJ_12242 (465 aa).

The segment at M1 to P66 is disordered. Over residues N11–E28 the composition is skewed to basic and acidic residues. Helical transmembrane passes span T70–I90, W115–F135, P142–K162, S175–L195, A200–I220, W231–V251, and P274–I294. N310 is a glycosylation site (N-linked (GlcNAc...) asparagine). Helical transmembrane passes span Y314–A334, M342–T362, I368–L388, I404–L424, and G430–L450.

This sequence belongs to the major facilitator superfamily. Monocarboxylate porter (TC 2.A.1.13) family.

The protein resides in the cell membrane. In terms of biological role, efflux pump that may be involved in the secretion of fujikurins. The protein is Fujikurins efflux protein FFUJ_12242 of Gibberella fujikuroi (strain CBS 195.34 / IMI 58289 / NRRL A-6831) (Bakanae and foot rot disease fungus).